The following is a 101-amino-acid chain: Large ribosomal subunit protein uL24 (101 aa).

Belongs to the universal ribosomal protein uL24 family. Part of the 50S ribosomal subunit.

In terms of biological role, one of two assembly initiator proteins, it binds directly to the 5'-end of the 23S rRNA, where it nucleates assembly of the 50S subunit. Its function is as follows. One of the proteins that surrounds the polypeptide exit tunnel on the outside of the subunit. The chain is Large ribosomal subunit protein uL24 from Streptococcus pneumoniae (strain ATCC 700669 / Spain 23F-1).